The primary structure comprises 263 residues: Thiazole synthase (263 aa).

Lys100 functions as the Schiff-base intermediate with DXP in the catalytic mechanism. Residues Gly161, 188–189 (AG), and 210–211 (NS) contribute to the 1-deoxy-D-xylulose 5-phosphate site.

The protein belongs to the ThiG family. Homotetramer. Forms heterodimers with either ThiH or ThiS.

Its subcellular location is the cytoplasm. It catalyses the reaction [ThiS sulfur-carrier protein]-C-terminal-Gly-aminoethanethioate + 2-iminoacetate + 1-deoxy-D-xylulose 5-phosphate = [ThiS sulfur-carrier protein]-C-terminal Gly-Gly + 2-[(2R,5Z)-2-carboxy-4-methylthiazol-5(2H)-ylidene]ethyl phosphate + 2 H2O + H(+). The protein operates within cofactor biosynthesis; thiamine diphosphate biosynthesis. Functionally, catalyzes the rearrangement of 1-deoxy-D-xylulose 5-phosphate (DXP) to produce the thiazole phosphate moiety of thiamine. Sulfur is provided by the thiocarboxylate moiety of the carrier protein ThiS. In vitro, sulfur can be provided by H(2)S. The sequence is that of Thiazole synthase from Pseudoalteromonas translucida (strain TAC 125).